The sequence spans 487 residues: UDP-N-acetylmuramoyl-L-alanyl-D-glutamate--2,6-diaminopimelate ligase (487 aa).

UDP-N-acetyl-alpha-D-muramoyl-L-alanyl-D-glutamate is bound by residues L23 and S25. G108–S114 is an ATP binding site. UDP-N-acetyl-alpha-D-muramoyl-L-alanyl-D-glutamate contacts are provided by residues T150–T151, S177, Q183, and R185. At K217 the chain carries N6-carboxylysine. Meso-2,6-diaminopimelate-binding positions include R378, D402 to R405, G453, and E457. Positions D402 to R405 match the Meso-diaminopimelate recognition motif motif.

The protein belongs to the MurCDEF family. MurE subfamily. It depends on Mg(2+) as a cofactor. Post-translationally, carboxylation is probably crucial for Mg(2+) binding and, consequently, for the gamma-phosphate positioning of ATP.

It is found in the cytoplasm. The enzyme catalyses UDP-N-acetyl-alpha-D-muramoyl-L-alanyl-D-glutamate + meso-2,6-diaminopimelate + ATP = UDP-N-acetyl-alpha-D-muramoyl-L-alanyl-gamma-D-glutamyl-meso-2,6-diaminopimelate + ADP + phosphate + H(+). It participates in cell wall biogenesis; peptidoglycan biosynthesis. Catalyzes the addition of meso-diaminopimelic acid to the nucleotide precursor UDP-N-acetylmuramoyl-L-alanyl-D-glutamate (UMAG) in the biosynthesis of bacterial cell-wall peptidoglycan. This Ectopseudomonas mendocina (strain ymp) (Pseudomonas mendocina) protein is UDP-N-acetylmuramoyl-L-alanyl-D-glutamate--2,6-diaminopimelate ligase.